Consider the following 322-residue polypeptide: Adenine deaminase (322 aa).

Zn(2+) contacts are provided by histidine 11, histidine 13, and histidine 189. The active-site Proton donor is the glutamate 192. Residue aspartate 270 coordinates Zn(2+). Substrate is bound at residue aspartate 271.

It belongs to the metallo-dependent hydrolases superfamily. Adenosine and AMP deaminases family. Adenine deaminase type 2 subfamily. The cofactor is Zn(2+).

The catalysed reaction is adenine + H2O + H(+) = hypoxanthine + NH4(+). In terms of biological role, catalyzes the hydrolytic deamination of adenine to hypoxanthine. Plays an important role in the purine salvage pathway and in nitrogen catabolism. The sequence is that of Adenine deaminase from Rhizobium leguminosarum bv. trifolii (strain WSM2304).